The following is a 20-amino-acid chain: Magnificalysin I (20 aa).

A plays an important role in the hemolytic activity region spans residues 1 to 10 (ALAGTIIAGA). The interval 9–20 (GASLTFKILDEV) is N-terminal region.

The protein belongs to the actinoporin family. Sea anemone subfamily. Octamer or nonamer in membranes. Monomer in the soluble state.

It localises to the secreted. The protein resides in the nematocyst. Its subcellular location is the target cell membrane. Pore-forming protein that forms cations-selective hydrophilic pores of around 1 nm and causes cytolysis. Pore formation is a multi-step process that involves specific recognition of membrane sphingomyelin (but neither cholesterol nor phosphatidylcholine) using aromatic rich region and adjacent phosphocholine (POC) binding site, firm binding to the membrane (mainly driven by hydrophobic interactions) accompanied by the transfer of the N-terminal region to the lipid-water interface and finally pore formation after oligomerization of monomers. This chain is Magnificalysin I, found in Heteractis magnifica (Magnificent sea anemone).